Consider the following 261-residue polypeptide: Ribonuclease PH (261 aa).

Residues Arg-87 and 125-127 each bind phosphate; that span reads GTR.

This sequence belongs to the RNase PH family. Homohexameric ring arranged as a trimer of dimers.

The catalysed reaction is tRNA(n+1) + phosphate = tRNA(n) + a ribonucleoside 5'-diphosphate. Functionally, phosphorolytic 3'-5' exoribonuclease that plays an important role in tRNA 3'-end maturation. Removes nucleotide residues following the 3'-CCA terminus of tRNAs; can also add nucleotides to the ends of RNA molecules by using nucleoside diphosphates as substrates, but this may not be physiologically important. Probably plays a role in initiation of 16S rRNA degradation (leading to ribosome degradation) during starvation. The sequence is that of Ribonuclease PH from Thermoanaerobacter pseudethanolicus (strain ATCC 33223 / 39E) (Clostridium thermohydrosulfuricum).